Here is a 158-residue protein sequence, read N- to C-terminus: 6,7-dimethyl-8-ribityllumazine synthase (158 aa).

5-amino-6-(D-ribitylamino)uracil is bound by residues phenylalanine 22, alanine 57–glutamate 59, and alanine 81–isoleucine 83. Glycine 86 to threonine 87 serves as a coordination point for (2S)-2-hydroxy-3-oxobutyl phosphate. Histidine 89 (proton donor) is an active-site residue. Phenylalanine 114 serves as a coordination point for 5-amino-6-(D-ribitylamino)uracil. (2S)-2-hydroxy-3-oxobutyl phosphate is bound at residue arginine 128.

The protein belongs to the DMRL synthase family. In terms of assembly, forms an icosahedral capsid composed of 60 subunits, arranged as a dodecamer of pentamers.

The enzyme catalyses (2S)-2-hydroxy-3-oxobutyl phosphate + 5-amino-6-(D-ribitylamino)uracil = 6,7-dimethyl-8-(1-D-ribityl)lumazine + phosphate + 2 H2O + H(+). The protein operates within cofactor biosynthesis; riboflavin biosynthesis; riboflavin from 2-hydroxy-3-oxobutyl phosphate and 5-amino-6-(D-ribitylamino)uracil: step 1/2. Functionally, catalyzes the formation of 6,7-dimethyl-8-ribityllumazine by condensation of 5-amino-6-(D-ribitylamino)uracil with 3,4-dihydroxy-2-butanone 4-phosphate. This is the penultimate step in the biosynthesis of riboflavin. The polypeptide is 6,7-dimethyl-8-ribityllumazine synthase (Shewanella pealeana (strain ATCC 700345 / ANG-SQ1)).